The following is a 185-amino-acid chain: Adenine phosphoribosyltransferase (185 aa).

It belongs to the purine/pyrimidine phosphoribosyltransferase family. As to quaternary structure, homodimer.

The protein resides in the cytoplasm. The catalysed reaction is AMP + diphosphate = 5-phospho-alpha-D-ribose 1-diphosphate + adenine. Its pathway is purine metabolism; AMP biosynthesis via salvage pathway; AMP from adenine: step 1/1. Functionally, catalyzes a salvage reaction resulting in the formation of AMP, that is energically less costly than de novo synthesis. The protein is Adenine phosphoribosyltransferase of Shewanella denitrificans (strain OS217 / ATCC BAA-1090 / DSM 15013).